Here is a 225-residue protein sequence, read N- to C-terminus: Protein-L-isoaspartate O-methyltransferase (225 aa).

Residue serine 75 is part of the active site.

It belongs to the methyltransferase superfamily. L-isoaspartyl/D-aspartyl protein methyltransferase family.

The protein localises to the cytoplasm. It carries out the reaction [protein]-L-isoaspartate + S-adenosyl-L-methionine = [protein]-L-isoaspartate alpha-methyl ester + S-adenosyl-L-homocysteine. Functionally, catalyzes the methyl esterification of L-isoaspartyl residues in peptides and proteins that result from spontaneous decomposition of normal L-aspartyl and L-asparaginyl residues. It plays a role in the repair and/or degradation of damaged proteins. This is Protein-L-isoaspartate O-methyltransferase from Xanthomonas oryzae pv. oryzae (strain PXO99A).